The following is a 203-amino-acid chain: Small ribosomal subunit protein uS4 (203 aa).

The interval Leu20 to Ser45 is disordered. Residues Met92–Ala155 form the S4 RNA-binding domain.

The protein belongs to the universal ribosomal protein uS4 family. Part of the 30S ribosomal subunit. Contacts protein S5. The interaction surface between S4 and S5 is involved in control of translational fidelity.

Its function is as follows. One of the primary rRNA binding proteins, it binds directly to 16S rRNA where it nucleates assembly of the body of the 30S subunit. In terms of biological role, with S5 and S12 plays an important role in translational accuracy. In Synechococcus sp. (strain JA-3-3Ab) (Cyanobacteria bacterium Yellowstone A-Prime), this protein is Small ribosomal subunit protein uS4.